The following is a 136-amino-acid chain: Acyl carrier protein 1, chloroplastic (136 aa).

The N-terminal 52 residues, 1-52 (MASVTGTSISMASFKASLAPSRVSNLRSVSLPIKGKSFAPLRMRSARFVVCC), are a transit peptide targeting the chloroplast. One can recognise a Carrier domain in the interval 56 to 131 (PETVEKVCAI…DAADLIEKLI (76 aa)). An O-(pantetheine 4'-phosphoryl)serine modification is found at serine 91.

This sequence belongs to the acyl carrier protein (ACP) family. Post-translationally, 4'-phosphopantetheine is transferred from CoA to a specific serine of apo-ACP by acpS. This modification is essential for activity because fatty acids are bound in thioester linkage to the sulfhydryl of the prosthetic group.

The protein localises to the plastid. Its subcellular location is the chloroplast. Its pathway is lipid metabolism; fatty acid biosynthesis. Carrier of the growing fatty acid chain in fatty acid biosynthesis. This is Acyl carrier protein 1, chloroplastic (ACP1) from Casuarina glauca (Swamp oak).